Reading from the N-terminus, the 109-residue chain is Iron-sulfur cluster assembly protein CyaY (109 aa).

The protein belongs to the frataxin family.

Involved in iron-sulfur (Fe-S) cluster assembly. May act as a regulator of Fe-S biogenesis. This Albidiferax ferrireducens (strain ATCC BAA-621 / DSM 15236 / T118) (Rhodoferax ferrireducens) protein is Iron-sulfur cluster assembly protein CyaY.